Consider the following 226-residue polypeptide: 7-cyano-7-deazaguanine synthase (226 aa).

ATP is bound at residue 10-20 (LSGGLDSATAA). Zn(2+)-binding residues include Cys-191, Cys-199, Cys-202, and Cys-205.

Belongs to the QueC family. Requires Zn(2+) as cofactor.

It catalyses the reaction 7-carboxy-7-deazaguanine + NH4(+) + ATP = 7-cyano-7-deazaguanine + ADP + phosphate + H2O + H(+). It participates in purine metabolism; 7-cyano-7-deazaguanine biosynthesis. Its function is as follows. Catalyzes the ATP-dependent conversion of 7-carboxy-7-deazaguanine (CDG) to 7-cyano-7-deazaguanine (preQ(0)). This chain is 7-cyano-7-deazaguanine synthase, found in Parasynechococcus marenigrum (strain WH8102).